Consider the following 99-residue polypeptide: Beta-defensin 127 (99 aa).

Residues 1 to 20 (MGLFMIIAILLFQKPTVTEQ) form the signal peptide. 3 cysteine pairs are disulfide-bonded: Cys-24–Cys-53, Cys-33–Cys-47, and Cys-37–Cys-54. Residues 66–99 (ITKPPRPKPATLALTLQDYVTIIENFPSLKTQST) constitute a propeptide that is removed on maturation.

Belongs to the beta-defensin family.

The protein localises to the secreted. Its function is as follows. Has antibacterial activity. This Homo sapiens (Human) protein is Beta-defensin 127 (DEFB127).